The chain runs to 178 residues: RNA pyrophosphohydrolase (178 aa).

In terms of domain architecture, Nudix hydrolase spans 18-171 (PYRPCVGLMV…KRKVYEQVVA (154 aa)). Positions 59-80 (GGIDKGEDPAQAALRELYEETG) match the Nudix box motif.

Belongs to the Nudix hydrolase family. RppH subfamily. The cofactor is a divalent metal cation.

In terms of biological role, accelerates the degradation of transcripts by removing pyrophosphate from the 5'-end of triphosphorylated RNA, leading to a more labile monophosphorylated state that can stimulate subsequent ribonuclease cleavage. In Brucella melitensis biotype 2 (strain ATCC 23457), this protein is RNA pyrophosphohydrolase.